The primary structure comprises 455 residues: uncharacterized protein (455 aa).

A compositionally biased stretch (low complexity) spans 1 to 20 (MGCCLSKKPSPSLPSSVKPS). Disordered regions lie at residues 1–234 (MGCC…IPAT) and 258–304 (RIAA…QNTK). 5 stretches are compositionally biased toward basic and acidic residues: residues 35–46 (EEAKPKSEKLNQ), 61–75 (SHEE…DKDS), 129–143 (RSFD…RGGD), 156–166 (RGVERVHGSPR), and 173–186 (PSRE…RERG). Over residues 213-224 (SCGSSVNSSNNR) the composition is skewed to polar residues. Low complexity predominate over residues 260 to 271 (AASPRSKSPARA).

This is an uncharacterized protein from Arabidopsis thaliana (Mouse-ear cress).